The following is a 448-amino-acid chain: Phosphoglucosamine mutase (448 aa).

Ser-102 acts as the Phosphoserine intermediate in catalysis. Residues Ser-102, Asp-243, Asp-245, and Asp-247 each contribute to the Mg(2+) site. Ser-102 bears the Phosphoserine mark.

It belongs to the phosphohexose mutase family. Requires Mg(2+) as cofactor. Post-translationally, activated by phosphorylation.

The catalysed reaction is alpha-D-glucosamine 1-phosphate = D-glucosamine 6-phosphate. Catalyzes the conversion of glucosamine-6-phosphate to glucosamine-1-phosphate. The sequence is that of Phosphoglucosamine mutase from Parvibaculum lavamentivorans (strain DS-1 / DSM 13023 / NCIMB 13966).